A 131-amino-acid polypeptide reads, in one-letter code: Squamosa promoter-binding-like protein 3 (131 aa).

The span at 1-17 (MSMRRSKAEGKRSLREL) shows a compositional bias: basic and acidic residues. Residues 1 to 54 (MSMRRSKAEGKRSLRELSEEEEEEEETEDEDTFEEEEALEKKQKGKATSSSGVC) are disordered. Residues 18-38 (SEEEEEEEETEDEDTFEEEEA) show a composition bias toward acidic residues. The tract at residues 45–129 (GKATSSSGVC…GHNERRRKST (85 aa)) is sufficient and necessary for DNA binding. The SBP-type zinc-finger motif lies at 51–128 (SGVCQVESCT…AGHNERRRKS (78 aa)). 8 residues coordinate Zn(2+): Cys54, Cys59, Cys76, His79, Cys95, Cys98, His102, and Cys114. The Bipartite nuclear localization signal motif lies at 111-127 (KRSCRRRLAGHNERRRK).

Requires Zn(2+) as cofactor. In terms of tissue distribution, expressed in vegetative and inflorescence apical meristems, floral meristems, leaf and flower organ primordia, inflorescence stem tissue and to lower extent in roots.

The protein resides in the nucleus. The protein localises to the cytoplasm. Functionally, trans-acting factor that binds specifically to the consensus nucleotide sequence 5'-TNCGTACAA-3' of AP1 promoter. Binds specifically to the 5'-GTAC-3' core sequence. Promotes both vegetative phase change and flowering. Regulates phase-specific patterns of leaf epidermal differentiation and flowering time, but does not seem to affect leaf shape. The protein is Squamosa promoter-binding-like protein 3 (SPL3) of Arabidopsis thaliana (Mouse-ear cress).